Reading from the N-terminus, the 287-residue chain is 33 kDa chaperonin (287 aa).

2 disulfide bridges follow: cysteine 231/cysteine 233 and cysteine 264/cysteine 267.

This sequence belongs to the HSP33 family. Under oxidizing conditions two disulfide bonds are formed involving the reactive cysteines. Under reducing conditions zinc is bound to the reactive cysteines and the protein is inactive.

The protein localises to the cytoplasm. Redox regulated molecular chaperone. Protects both thermally unfolding and oxidatively damaged proteins from irreversible aggregation. Plays an important role in the bacterial defense system toward oxidative stress. The polypeptide is 33 kDa chaperonin (Thermosipho melanesiensis (strain DSM 12029 / CIP 104789 / BI429)).